Consider the following 38-residue polypeptide: Large ribosomal subunit protein bL36 (38 aa).

The protein belongs to the bacterial ribosomal protein bL36 family.

The chain is Large ribosomal subunit protein bL36 from Flavobacterium johnsoniae (strain ATCC 17061 / DSM 2064 / JCM 8514 / BCRC 14874 / CCUG 350202 / NBRC 14942 / NCIMB 11054 / UW101) (Cytophaga johnsonae).